The following is a 555-amino-acid chain: Formate--tetrahydrofolate ligase (555 aa).

T65–S72 contacts ATP.

Belongs to the formate--tetrahydrofolate ligase family.

It carries out the reaction (6S)-5,6,7,8-tetrahydrofolate + formate + ATP = (6R)-10-formyltetrahydrofolate + ADP + phosphate. It participates in one-carbon metabolism; tetrahydrofolate interconversion. The protein is Formate--tetrahydrofolate ligase of Staphylococcus aureus (strain COL).